Consider the following 245-residue polypeptide: Eukaryotic translation initiation factor 3 subunit K (245 aa).

The region spanning 46 to 227 is the PCI domain; the sequence is YDCYANLALL…EAKGTVVREN (182 aa).

It belongs to the eIF-3 subunit K family. In terms of assembly, component of the eukaryotic translation initiation factor 3 (eIF-3) complex.

The protein localises to the cytoplasm. Component of the eukaryotic translation initiation factor 3 (eIF-3) complex, which is involved in protein synthesis of a specialized repertoire of mRNAs and, together with other initiation factors, stimulates binding of mRNA and methionyl-tRNAi to the 40S ribosome. The eIF-3 complex specifically targets and initiates translation of a subset of mRNAs involved in cell proliferation. This chain is Eukaryotic translation initiation factor 3 subunit K, found in Sclerotinia sclerotiorum (strain ATCC 18683 / 1980 / Ss-1) (White mold).